The following is a 530-amino-acid chain: Chaperone Ric-8A (530 aa).

A Phosphoserine modification is found at Ser435. 2 positions are modified to phosphothreonine: Thr440 and Thr442. A phosphoserine mark is found at Ser501, Ser522, Ser523, and Ser527.

The protein belongs to the synembryn family. In terms of assembly, interacts with GDP-bound G alpha proteins GNAI1, GNAO1 and GNAQ, and with GNA13 with lower affinity. Does not interact with G-alpha proteins when they are in complex with subunits beta and gamma. Interacts (via C-terminus) with RGS14; the interaction stimulates the dissociation of the complex between RGS14 and the active GTP-bound form of GNAI1. Interacts with NCS1; interaction is favored in the absence of Ca(2+) and myristoylation of NCS1 is not required. Phosphorylated at Ser-435 and Thr-440 by CK2, stabilizing its interface with G alpha proteins.

The protein resides in the cytoplasm. Its subcellular location is the cell cortex. In terms of biological role, chaperone that specifically binds and folds nascent G alpha proteins prior to G protein heterotrimer formation, promoting their stability and activity: folds GNAI1, GNAO1, GNA13 and GNAQ. Does not fold G(s) G-alpha proteins GNAS nor GNAL. Also acts as a guanine nucleotide exchange factor (GEF) for G alpha proteins by stimulating exchange of bound GDP for free GTP. Involved in regulation of microtubule pulling forces during mitotic movement of chromosomes by stimulating G(i)-alpha protein (GNAI1), possibly leading to release G(i)-alpha-GTP and NuMA proteins from the NuMA-GPSM2-G(i)-alpha-GDP complex. Also acts as an activator for G(q)-alpha (GNAQ) protein by enhancing the G(q)-coupled receptor-mediated ERK activation. This chain is Chaperone Ric-8A (RIC8A), found in Bos taurus (Bovine).